The following is a 235-amino-acid chain: MTELARLKFYATQPHTCSYLPEEQATTLFLDPSQPMDVQVYADLSDMGFRRSGDHLYRPHCQNCSACVPARIPVNLFIPDRQQKRILKRNVDIQVQSAKPAFTQEYFDLYQRYIEQRHADGDMFPPSQEQFSTFLVRDLPFSRFYEFRVDQRLLAVAVTDLLPNGLSAVYTFYEPDEERRSLGRYAILWQIAEAARLQLQAVYLGYWIKNCKKMNYKTQYRPIELLTNQRWVTLY.

Belongs to the R-transferase family. Bpt subfamily.

The protein resides in the cytoplasm. The enzyme catalyses N-terminal L-glutamyl-[protein] + L-leucyl-tRNA(Leu) = N-terminal L-leucyl-L-glutamyl-[protein] + tRNA(Leu) + H(+). The catalysed reaction is N-terminal L-aspartyl-[protein] + L-leucyl-tRNA(Leu) = N-terminal L-leucyl-L-aspartyl-[protein] + tRNA(Leu) + H(+). Functions in the N-end rule pathway of protein degradation where it conjugates Leu from its aminoacyl-tRNA to the N-termini of proteins containing an N-terminal aspartate or glutamate. This chain is Aspartate/glutamate leucyltransferase, found in Pseudomonas syringae pv. syringae (strain B728a).